Reading from the N-terminus, the 150-residue chain is Arginine repressor (150 aa).

It belongs to the ArgR family.

Its subcellular location is the cytoplasm. It participates in amino-acid biosynthesis; L-arginine biosynthesis [regulation]. Regulates arginine biosynthesis genes. The polypeptide is Arginine repressor (Staphylococcus saprophyticus subsp. saprophyticus (strain ATCC 15305 / DSM 20229 / NCIMB 8711 / NCTC 7292 / S-41)).